Reading from the N-terminus, the 385-residue chain is Chaperone protein DnaJ (385 aa).

Positions 5 to 70 constitute a J domain; sequence DYYEILEITR…SKRQIYDKYG (66 aa). The CR-type zinc-finger motif lies at 136–213; the sequence is GCKKEIHNSF…CKGSGFEISE (78 aa). Zn(2+) is bound by residues C149, C152, C165, C168, C187, C190, C201, and C204. 4 CXXCXGXG motif repeats span residues 149 to 156, 165 to 172, 187 to 194, and 201 to 208; these read CSDCKGTG, CKDCGGKG, CPTCKGEG, and CSKCKGSG.

This sequence belongs to the DnaJ family. In terms of assembly, homodimer. It depends on Zn(2+) as a cofactor.

Its subcellular location is the cytoplasm. Its function is as follows. Participates actively in the response to hyperosmotic and heat shock by preventing the aggregation of stress-denatured proteins and by disaggregating proteins, also in an autonomous, DnaK-independent fashion. Unfolded proteins bind initially to DnaJ; upon interaction with the DnaJ-bound protein, DnaK hydrolyzes its bound ATP, resulting in the formation of a stable complex. GrpE releases ADP from DnaK; ATP binding to DnaK triggers the release of the substrate protein, thus completing the reaction cycle. Several rounds of ATP-dependent interactions between DnaJ, DnaK and GrpE are required for fully efficient folding. Also involved, together with DnaK and GrpE, in the DNA replication of plasmids through activation of initiation proteins. This Helicobacter hepaticus (strain ATCC 51449 / 3B1) protein is Chaperone protein DnaJ.